Consider the following 284-residue polypeptide: Tryptophan synthase alpha chain (284 aa).

Catalysis depends on proton acceptor residues glutamate 59 and aspartate 70.

Belongs to the TrpA family. As to quaternary structure, tetramer of two alpha and two beta chains.

It catalyses the reaction (1S,2R)-1-C-(indol-3-yl)glycerol 3-phosphate + L-serine = D-glyceraldehyde 3-phosphate + L-tryptophan + H2O. The protein operates within amino-acid biosynthesis; L-tryptophan biosynthesis; L-tryptophan from chorismate: step 5/5. Its function is as follows. The alpha subunit is responsible for the aldol cleavage of indoleglycerol phosphate to indole and glyceraldehyde 3-phosphate. This chain is Tryptophan synthase alpha chain, found in Azospirillum brasilense.